We begin with the raw amino-acid sequence, 464 residues long: Soluble pyridine nucleotide transhydrogenase (464 aa).

35–44 (DSRRVVGGNC) lines the FAD pocket.

Belongs to the class-I pyridine nucleotide-disulfide oxidoreductase family. FAD is required as a cofactor.

It is found in the cytoplasm. The catalysed reaction is NAD(+) + NADPH = NADH + NADP(+). Conversion of NADPH, generated by peripheral catabolic pathways, to NADH, which can enter the respiratory chain for energy generation. The protein is Soluble pyridine nucleotide transhydrogenase of Pseudomonas paraeruginosa (strain DSM 24068 / PA7) (Pseudomonas aeruginosa (strain PA7)).